The following is a 298-amino-acid chain: Chromatin modification-related protein YNG2 (298 aa).

Residues 20-86 (EVRHLLEEIK…KLVQKLQKEK (67 aa)) adopt a coiled-coil conformation. Positions 140 to 158 (GFSDSASATPTPRNGSSAT) are enriched in polar residues. Residues 140-206 (GFSDSASATP…EEIEDPLPYE (67 aa)) form a disordered region. Low complexity predominate over residues 174–188 (VKGASSSSAQSSSAS). Residues 237–288 (NLYCFCQRVSFGEMIGCDNEDCKYEWFHWSCVGITSPPKDDEIWYCPDCASK) form a PHD-type zinc finger. Zn(2+) is bound by residues cysteine 240, cysteine 242, cysteine 253, cysteine 258, histidine 264, cysteine 267, cysteine 282, and cysteine 285.

Belongs to the ING family. Interacts with H3K4me3 and to a lesser extent with H3K4me2. Component of the NuA4 histone acetyltransferase complex.

The protein localises to the nucleus. Its function is as follows. Component of the NuA4 histone acetyltransferase complex which is involved in transcriptional activation of selected genes principally by acetylation of nucleosomal histone H4 and H2A. The NuA4 complex is also involved in DNA repair. Involved in cell cycle progression and meiosis. The polypeptide is Chromatin modification-related protein YNG2 (YNG2) (Candida albicans (strain SC5314 / ATCC MYA-2876) (Yeast)).